The sequence spans 134 residues: Larval cuticle protein A3A (134 aa).

Repeat 1 spans residues 23–26 (AAPV). The segment at 38 to 80 (DPHPQYSYGYDIQDGLTGDSKNQQETRDGDVVQGSYSLVDPDG) is disordered. In terms of domain architecture, Chitin-binding type R&amp;R spans 40 to 106 (HPQYSYGYDI…AVVHREPLVA (67 aa)). Residues 111–114 (AAPA) form repeat 2.

Functionally, component of the cuticle of the larva of Tenebrio molitor. The protein is Larval cuticle protein A3A of Tenebrio molitor (Yellow mealworm beetle).